The primary structure comprises 268 residues: MFRMLSSSFEDDPFFSESILAHRENMRQMMRSFTEPFGRDLLSISDGRGRVHNRRGHNDGEDSLTHTDVSSLQTVDQMVSNMRNYMQKLERNFGQLSVDPNGHSFCSSSVMTYSKIGDEPPKVFQASTQTRRAPGGIKETRKAMRDSDSGLEKMAIGHHIHDRAHVIKKSKNKKTGDEEVNQEFINMNESDAHAFDEEWQSEVLKYKPGRHNLENTRMRSVGHENPGSRELKRREKPQQSPAIEHGRRSDVLGDKLHIKGSSVKSNKK.

Phosphoserine is present on residues Ser6, Ser8, and Ser32. The interval 50 to 125 (RVHNRRGHND…IGDEPPKVFQ (76 aa)) is interaction with COPS3. Residues 208–268 (PGRHNLENTR…KGSSVKSNKK (61 aa)) form a disordered region. Basic and acidic residues-rich tracts occupy residues 226–237 (PGSRELKRREKP) and 244–257 (EHGR…DKLH).

This sequence belongs to the MLF family. In terms of assembly, interacts with CENPU. Also interacts with NRBP1/MADM, YWHAZ/14-3-3-zeta and HNRPUL2/MANP. NRBP1 recruits a serine kinase which phosphorylates both itself and MLF1. Phosphorylated MLF1 then binds to YWHAZ and is retained in the cytoplasm. Retained in the nucleus by binding to HNRPUL2. Binds to COPS3/CSN3 which is required for suppression of COP1 and activation of p53. In terms of processing, phosphorylation is required for binding to YWHAZ.

Its subcellular location is the cytoplasm. It localises to the nucleus. The protein resides in the cell projection. It is found in the cilium. The protein localises to the cytoskeleton. Its subcellular location is the cilium basal body. Involved in lineage commitment of primary hemopoietic progenitors by restricting erythroid formation and enhancing myeloid formation. Interferes with erythropoietin-induced erythroid terminal differentiation by preventing cells from exiting the cell cycle through suppression of CDKN1B/p27Kip1 levels. Suppresses COP1 activity via CSN3 which activates p53 and induces cell cycle arrest. Binds DNA and affects the expression of a number of genes so may function as a transcription factor in the nucleus. This chain is Myeloid leukemia factor 1 (MLF1), found in Pongo abelii (Sumatran orangutan).